Consider the following 440-residue polypeptide: WAS/WASL-interacting protein family member 2 (440 aa).

The span at 1–18 shows a compositional bias: pro residues; the sequence is MPIPPPPPPPPGPPPPPT. The disordered stretch occupies residues 1 to 36; the sequence is MPIPPPPPPPPGPPPPPTFHQANTEQPKLSRDEQRG. The WH2 domain maps to 36–53; the sequence is GRGALLQDICKGTKLKKV. R37 bears the Asymmetric dimethylarginine mark. A binds actin region spans residues 49-52; the sequence is KLKK. Disordered stretches follow at residues 56–387 and 419–440; these read INDR…DSIT and RIYP…PILR. Over residues 116 to 133 the composition is skewed to low complexity; sequence PSSRAAAPRPPVSAASGR. Positions 161-172 are enriched in polar residues; that stretch reads RPNTTSSTGMKH. 4 stretches are compositionally biased toward pro residues: residues 176–193, 222–236, 249–262, and 356–378; these read APPP…PTPL, EGPP…PPSP, APPP…PGVP, and RGKP…PPPL.

Belongs to the verprolin family. As to quaternary structure, interacts with WASL and WASP, and this interaction results in cytoplasmic relocation of these two proteins along actin filaments. Interacts with NCK2 resulting in the localization to sites of focal adhesions. No interaction was seen with WASF2 and WASF3. As to expression, expressed mainly in brain, colon, lung and stomach (at protein level). Ubiquitously expressed, with high expression in brain, kidney, lung, and placenta.

It is found in the cytoplasm. The protein resides in the cytoskeleton. Its function is as follows. Plays an active role in the formation of cell surface protrusions downstream of activated PDGFB receptors. Plays an important role in actin-microspike formation through cooperation with WASL. May cooperate with WASP and WASL to induce mobilization and reorganization of the actin filament system. The protein is WAS/WASL-interacting protein family member 2 (WIPF2) of Homo sapiens (Human).